We begin with the raw amino-acid sequence, 76 residues long: Glutathione S-transferase (76 aa).

The GST N-terminal domain occupies 1–40; that stretch reads XVAFETVPVDLMKGEHKQPAYLALQPFGTVPAVVDGDYXL. The 36-residue stretch at 41–76 folds into the GST C-terminal domain; the sequence is LSAVLDVYEAHLHGYLAGDFVSLADLAHLPFTDYLV.

It belongs to the GST superfamily. Theta family.

The protein localises to the cytoplasm. The catalysed reaction is RX + glutathione = an S-substituted glutathione + a halide anion + H(+). Its function is as follows. Conjugation of reduced glutathione to a wide number of exogenous and endogenous hydrophobic electrophiles. The polypeptide is Glutathione S-transferase (Brassica oleracea var. italica (Broccoli)).